Reading from the N-terminus, the 94-residue chain is Pyrimidine/purine nucleoside phosphorylase (94 aa).

It belongs to the nucleoside phosphorylase PpnP family.

The catalysed reaction is a purine D-ribonucleoside + phosphate = a purine nucleobase + alpha-D-ribose 1-phosphate. It catalyses the reaction adenosine + phosphate = alpha-D-ribose 1-phosphate + adenine. The enzyme catalyses cytidine + phosphate = cytosine + alpha-D-ribose 1-phosphate. It carries out the reaction guanosine + phosphate = alpha-D-ribose 1-phosphate + guanine. The catalysed reaction is inosine + phosphate = alpha-D-ribose 1-phosphate + hypoxanthine. It catalyses the reaction thymidine + phosphate = 2-deoxy-alpha-D-ribose 1-phosphate + thymine. The enzyme catalyses uridine + phosphate = alpha-D-ribose 1-phosphate + uracil. It carries out the reaction xanthosine + phosphate = alpha-D-ribose 1-phosphate + xanthine. Catalyzes the phosphorolysis of diverse nucleosides, yielding D-ribose 1-phosphate and the respective free bases. Can use uridine, adenosine, guanosine, cytidine, thymidine, inosine and xanthosine as substrates. Also catalyzes the reverse reactions. The polypeptide is Pyrimidine/purine nucleoside phosphorylase (Saccharophagus degradans (strain 2-40 / ATCC 43961 / DSM 17024)).